The chain runs to 1020 residues: Sodium/potassium-transporting ATPase subunit alpha-2 (1020 aa).

The propeptide occupies 1-5 (MGRGA). A disordered region spans residues 1-31 (MGRGAGREYSPAATTAENGGGKKKQKEKELD). Residues 6-85 (GREYSPAATT…NALTPPPTTP (80 aa)) are Cytoplasmic-facing. Serine 10 is subject to Phosphoserine. The interval 80 to 82 (PPP) is interaction with phosphoinositide-3 kinase. The helical transmembrane segment at 86–106 (EWVKFCRQLFGGFSILLWIGA) threads the bilayer. Residues 107–129 (ILCFLAYGIQAAMEDEPSNDNLY) are Extracellular-facing. The chain crosses the membrane as a helical span at residues 130-150 (LGVVLAAVVIVTGCFSYYQEA). At 151-286 (KSSKIMDSFK…VGRTPIAMEI (136 aa)) the chain is on the cytoplasmic side. Polar residues predominate over residues 212–227 (DNSSLTGESEPQTRSP). Positions 212-231 (DNSSLTGESEPQTRSPEFTH) are disordered. A helical transmembrane segment spans residues 287–306 (EHFIQLITGVAVFPGVSFFV). Residues 307 to 318 (LSLILGYSWLEA) lie on the Extracellular side of the membrane. Residues 319–336 (VIFLIGIIVANVPEGLLA) form a helical membrane-spanning segment. The Cytoplasmic portion of the chain corresponds to 337 to 769 (TVTVCLTLTA…EEGRLVFDNL (433 aa)). Aspartate 374 serves as the catalytic 4-aspartylphosphate intermediate. Serine 439, serine 450, serine 496, and serine 559 each carry phosphoserine. A Phosphothreonine modification is found at threonine 570. 2 positions are modified to phosphoserine: serine 587 and serine 672. Residues aspartate 714 and aspartate 718 each coordinate Mg(2+). Residues 770–789 (KKSIAYTLTSNIPEITPFLL) traverse the membrane as a helical segment. The Extracellular portion of the chain corresponds to 790–799 (FIIANIPLPL). Residues 800–820 (GTVTILCIDLGTDMVPAISLA) traverse the membrane as a helical segment. The Cytoplasmic segment spans residues 821-840 (YEAAESDIMKRQPRNSQTDK). Serine 826 bears the Phosphoserine mark. A helical membrane pass occupies residues 841–863 (LVNERLISMAYGQIGMIQALGGF). Topologically, residues 864–915 (FTYFVILAENGFLPSRLLGIRLDWDDRTMNDLEDSYGQEWTYEQRKVVEFTC) are extracellular. The chain crosses the membrane as a helical span at residues 916 to 935 (HTAFFASIVVVQWADLIICK). Residues 936–948 (TRRNSVFQQGMKN) lie on the Cytoplasmic side of the membrane. Serine 940 carries the post-translational modification Phosphoserine; by PKA. Residues 949–967 (KILIFGLLEETALAAFLSY) traverse the membrane as a helical segment. Residues 968-982 (CPGMGVALRMYPLKV) lie on the Extracellular side of the membrane. The helical transmembrane segment at 983–1003 (TWWFCAFPYSLLIFIYDEVRK) threads the bilayer. Residues 1004 to 1020 (LILRRYPGGWVEKETYY) lie on the Cytoplasmic side of the membrane.

This sequence belongs to the cation transport ATPase (P-type) (TC 3.A.3) family. Type IIC subfamily. As to quaternary structure, the sodium/potassium-transporting ATPase is composed of a catalytic alpha subunit, an auxiliary non-catalytic beta subunit and an additional regulatory subunit. Interacts with regulatory subunit FXYD1.

It localises to the membrane. The protein resides in the cell membrane. The enzyme catalyses K(+)(out) + Na(+)(in) + ATP + H2O = K(+)(in) + Na(+)(out) + ADP + phosphate + H(+). Its function is as follows. This is the catalytic component of the active enzyme, which catalyzes the hydrolysis of ATP coupled with the exchange of sodium and potassium ions across the plasma membrane. This action creates the electrochemical gradient of sodium and potassium, providing the energy for active transport of various nutrients. The protein is Sodium/potassium-transporting ATPase subunit alpha-2 (ATP1A2) of Pongo abelii (Sumatran orangutan).